A 365-amino-acid polypeptide reads, in one-letter code: Ribosomal RNA large subunit methyltransferase M (365 aa).

Residues Ser187, 220 to 223, Asp239, Asp259, and Asp276 contribute to the S-adenosyl-L-methionine site; that span reads CPGG. Lys305 (proton acceptor) is an active-site residue.

Belongs to the class I-like SAM-binding methyltransferase superfamily. RNA methyltransferase RlmE family. RlmM subfamily. Monomer.

It is found in the cytoplasm. It carries out the reaction cytidine(2498) in 23S rRNA + S-adenosyl-L-methionine = 2'-O-methylcytidine(2498) in 23S rRNA + S-adenosyl-L-homocysteine + H(+). Its function is as follows. Catalyzes the 2'-O-methylation at nucleotide C2498 in 23S rRNA. In Psychromonas ingrahamii (strain DSM 17664 / CCUG 51855 / 37), this protein is Ribosomal RNA large subunit methyltransferase M.